The following is a 117-amino-acid chain: Cell division protein FtsB (117 aa).

The Cytoplasmic segment spans residues 1 to 6 (MRDWRW). A helical transmembrane segment spans residues 7–24 (MLLVLALLLGWLQYRFWF). Residues 25–117 (GPGNSGEVMM…QVGDHPADVP (93 aa)) lie on the Periplasmic side of the membrane. Positions 29–69 (SGEVMMLEAQVANQERDNEGLQQRNDALAAEVKDLKEGQSA) form a coiled coil.

It belongs to the FtsB family. Part of a complex composed of FtsB, FtsL and FtsQ.

It is found in the cell inner membrane. In terms of biological role, essential cell division protein. May link together the upstream cell division proteins, which are predominantly cytoplasmic, with the downstream cell division proteins, which are predominantly periplasmic. The chain is Cell division protein FtsB from Stenotrophomonas maltophilia (strain K279a).